The chain runs to 100 residues: Large ribosomal subunit protein bL21 (100 aa).

It belongs to the bacterial ribosomal protein bL21 family. As to quaternary structure, part of the 50S ribosomal subunit. Contacts protein L20.

This protein binds to 23S rRNA in the presence of protein L20. The polypeptide is Large ribosomal subunit protein bL21 (Rhodospirillum rubrum (strain ATCC 11170 / ATH 1.1.1 / DSM 467 / LMG 4362 / NCIMB 8255 / S1)).